The sequence spans 305 residues: Ubiquinone biosynthesis protein COQ4 homolog, mitochondrial (305 aa).

Residues histidine 150, aspartate 151, histidine 154, and glutamate 166 each contribute to the Zn(2+) site.

This sequence belongs to the COQ4 family. As to quaternary structure, component of a multi-subunit COQ enzyme complex. The cofactor is Zn(2+).

Its subcellular location is the mitochondrion inner membrane. The enzyme catalyses a 4-hydroxy-3-methoxy-5-(all-trans-polyprenyl)benzoate + H(+) = a 2-methoxy-6-(all-trans-polyprenyl)phenol + CO2. It participates in cofactor biosynthesis; ubiquinone biosynthesis. Its function is as follows. Lyase that catalyzes the C1-decarboxylation of 4-hydroxy-3-methoxy-5-(all-trans-polyprenyl)benzoic acid into 2-methoxy-6-(all-trans-polyprenyl)phenol during ubiquinone biosynthesis. The polypeptide is Ubiquinone biosynthesis protein COQ4 homolog, mitochondrial (Cryptosporidium parvum (strain Iowa II)).